The primary structure comprises 299 residues: tRNA dimethylallyltransferase (299 aa).

ATP is bound at residue 8-15 (GPTASGKT). 10-15 (TASGKT) is a binding site for substrate. The interval 33 to 36 (DSQQ) is interaction with substrate tRNA.

This sequence belongs to the IPP transferase family. In terms of assembly, monomer. Mg(2+) is required as a cofactor.

The enzyme catalyses adenosine(37) in tRNA + dimethylallyl diphosphate = N(6)-dimethylallyladenosine(37) in tRNA + diphosphate. Functionally, catalyzes the transfer of a dimethylallyl group onto the adenine at position 37 in tRNAs that read codons beginning with uridine, leading to the formation of N6-(dimethylallyl)adenosine (i(6)A). The sequence is that of tRNA dimethylallyltransferase from Anaeromyxobacter dehalogenans (strain 2CP-C).